A 300-amino-acid chain; its full sequence is UDP-N-acetylenolpyruvoylglucosamine reductase (300 aa).

In terms of domain architecture, FAD-binding PCMH-type spans 30 to 194 (RVGGPADFFV…IGATFVLDSD (165 aa)). The active site involves arginine 174. The active-site Proton donor is serine 223. Glutamate 293 is an active-site residue.

The protein belongs to the MurB family. The cofactor is FAD.

It is found in the cytoplasm. It carries out the reaction UDP-N-acetyl-alpha-D-muramate + NADP(+) = UDP-N-acetyl-3-O-(1-carboxyvinyl)-alpha-D-glucosamine + NADPH + H(+). Its pathway is cell wall biogenesis; peptidoglycan biosynthesis. Functionally, cell wall formation. This chain is UDP-N-acetylenolpyruvoylglucosamine reductase, found in Geobacter sulfurreducens (strain ATCC 51573 / DSM 12127 / PCA).